The following is a 451-amino-acid chain: Ribulose bisphosphate carboxylase large chain (451 aa).

N6,N6,N6-trimethyllysine is present on K5. Substrate contacts are provided by N114 and T164. The active-site Proton acceptor is the K166. K168 is a binding site for substrate. Residues K192, D194, and E195 each contribute to the Mg(2+) site. K192 carries the N6-carboxylysine modification. H285 functions as the Proton acceptor in the catalytic mechanism. Substrate is bound by residues R286, H318, and S370.

This sequence belongs to the RuBisCO large chain family. Type I subfamily. In terms of assembly, heterohexadecamer of 8 large chains and 8 small chains; disulfide-linked. The disulfide link is formed within the large subunit homodimers. It depends on Mg(2+) as a cofactor. In terms of processing, the disulfide bond which can form in the large chain dimeric partners within the hexadecamer appears to be associated with oxidative stress and protein turnover.

It localises to the plastid. The protein localises to the chloroplast. It catalyses the reaction 2 (2R)-3-phosphoglycerate + 2 H(+) = D-ribulose 1,5-bisphosphate + CO2 + H2O. The enzyme catalyses D-ribulose 1,5-bisphosphate + O2 = 2-phosphoglycolate + (2R)-3-phosphoglycerate + 2 H(+). Functionally, ruBisCO catalyzes two reactions: the carboxylation of D-ribulose 1,5-bisphosphate, the primary event in carbon dioxide fixation, as well as the oxidative fragmentation of the pentose substrate in the photorespiration process. Both reactions occur simultaneously and in competition at the same active site. This Aristea glauca protein is Ribulose bisphosphate carboxylase large chain.